The primary structure comprises 332 residues: Small ribosomal subunit biogenesis GTPase RsgA (332 aa).

In terms of domain architecture, CP-type G spans R103 to L259. GTP-binding positions include T148–D151 and G201–T209. C281, C286, H288, and C294 together coordinate Zn(2+).

It belongs to the TRAFAC class YlqF/YawG GTPase family. RsgA subfamily. Monomer. Associates with 30S ribosomal subunit, binds 16S rRNA. Requires Zn(2+) as cofactor.

The protein resides in the cytoplasm. One of several proteins that assist in the late maturation steps of the functional core of the 30S ribosomal subunit. Helps release RbfA from mature subunits. May play a role in the assembly of ribosomal proteins into the subunit. Circularly permuted GTPase that catalyzes slow GTP hydrolysis, GTPase activity is stimulated by the 30S ribosomal subunit. This chain is Small ribosomal subunit biogenesis GTPase RsgA, found in Xylella fastidiosa (strain M23).